Consider the following 465-residue polypeptide: UDP-N-acetylmuramate--L-alanine ligase (465 aa).

An ATP-binding site is contributed by Gly112–Thr118.

Belongs to the MurCDEF family.

The protein localises to the cytoplasm. It carries out the reaction UDP-N-acetyl-alpha-D-muramate + L-alanine + ATP = UDP-N-acetyl-alpha-D-muramoyl-L-alanine + ADP + phosphate + H(+). It functions in the pathway cell wall biogenesis; peptidoglycan biosynthesis. Its function is as follows. Cell wall formation. This Burkholderia orbicola (strain MC0-3) protein is UDP-N-acetylmuramate--L-alanine ligase.